We begin with the raw amino-acid sequence, 652 residues long: Sodium-dependent phosphate transporter 2 (652 aa).

Residues 1–5 (MAMDE) lie on the Extracellular side of the membrane. The helical transmembrane segment at 6–26 (YLWMVILGFIIAFILAFSVGA) threads the bilayer. Over 27–46 (NDVANSFGTAVGSGVVTLRQ) the chain is Cytoplasmic. A helical transmembrane segment spans residues 47–67 (ACILASIFETTGSVLLGAKVG). At 68-86 (ETIRKGIIDVNLYNETVET) the chain is on the extracellular side. A glycan (N-linked (GlcNAc...) asparagine) is linked at asparagine 81. A helical membrane pass occupies residues 87 to 107 (LMAGEVSAMVGSAVWQLIASF). The Cytoplasmic portion of the chain corresponds to 108–109 (LR). Residues 110-130 (LPISGTHCIVGSTIGFSLVAI) traverse the membrane as a helical segment. Topologically, residues 131 to 142 (GTKGVQWMELVK) are extracellular. A helical transmembrane segment spans residues 143 to 163 (IVASWFISPLLSGFMSGLLFV). Residues 164-190 (LIRIFILKKEDPVPNGLRALPVFYAAT) are Cytoplasmic-facing. The chain crosses the membrane as a helical span at residues 191–211 (IAINVFSIMYTGAPVLGLVLP). Residues 212-213 (MW) lie on the Extracellular side of the membrane. The chain crosses the membrane as a helical span at residues 214–234 (AIALISFGVALLFAFFVWLFV). Residues 235 to 482 (CPWMRRKITG…EEKEEKDAPE (248 aa)) are Cytoplasmic-facing. A phosphoserine mark is found at serine 253, serine 256, serine 259, and serine 268. Residues 273-307 (ELPGAKANDDSTIPLTGAAGETLGTSEGTSAGSHP) form a disordered region. Over residues 295–304 (LGTSEGTSAG) the composition is skewed to polar residues. Phosphoserine is present on residues serine 316 and serine 385. The disordered stretch occupies residues 458 to 477 (SELADPDQPREDPAEEEKEE). The helical transmembrane segment at 483 to 503 (VHLLFHFLQVLTACFGSFAHG) threads the bilayer. The Extracellular segment spans residues 504–530 (GNDVSNAIGPLVALWLIYKQGGVTQEA). The helical transmembrane segment at 531–551 (ATPVWLLFYGGVGICTGLWVW) threads the bilayer. Residues 552–571 (GRRVIQTMGKDLTPITPSSG) are Cytoplasmic-facing. Residues 572 to 586 (FTIELASAFTVVIAS) form a helical membrane-spanning segment. Topologically, residues 587–593 (NIGLPVS) are extracellular. A helical membrane pass occupies residues 594–609 (TTHCKVGSVVAVGWIR). Topologically, residues 610 to 621 (SRKAVDWRLFRN) are cytoplasmic. The helical transmembrane segment at 622–642 (IFVAWFVTVPVAGLFSAAVMA) threads the bilayer. At 643–652 (LLMYGILPYV) the chain is on the extracellular side.

The protein belongs to the inorganic phosphate transporter (PiT) (TC 2.A.20) family. Homodimer. Ubiquitously expressed.

Its subcellular location is the cell membrane. The protein resides in the apical cell membrane. It carries out the reaction 2 Na(+)(out) + phosphate(out) = 2 Na(+)(in) + phosphate(in). Its function is as follows. Sodium-phosphate symporter which preferentially transports the monovalent form of phosphate with a stoichiometry of two sodium ions per phosphate ion. Plays a critical role in the determination of bone quality and strength by providing phosphate for bone mineralization. Required to maintain normal cerebrospinal fluid phosphate levels. Mediates phosphate-induced calcification of vascular smooth muscle cells (VCMCs) and can functionally compensate for loss of SLC20A1 in VCMCs. (Microbial infection) Functions as a retroviral receptor and confers human cells susceptibility to infection to amphotropic murine leukemia virus (A-MuLV), 10A1 murine leukemia virus (10A1 MLV) and some feline leukemia virus subgroup B (FeLV-B) variants. The sequence is that of Sodium-dependent phosphate transporter 2 (SLC20A2) from Homo sapiens (Human).